The chain runs to 113 residues: Large ribosomal subunit protein bL20c (113 aa).

It belongs to the bacterial ribosomal protein bL20 family.

It is found in the plastid. The protein localises to the chloroplast. In terms of biological role, binds directly to 23S ribosomal RNA and is necessary for the in vitro assembly process of the 50S ribosomal subunit. It is not involved in the protein synthesizing functions of that subunit. This is Large ribosomal subunit protein bL20c from Nephroselmis olivacea (Green alga).